Reading from the N-terminus, the 90-residue chain is Interferon alpha-inducible protein 27-like protein 2A (90 aa).

Positions 1–24 (MLGTLFGSAIGGALAVAGAPVALA) are cleaved as a signal peptide. 2 helical membrane-spanning segments follow: residues 28–48 (FTGTGIAAASIAAKMMSAAAI) and 67–89 (GVLGLSTSTNAILGAAGAAVGAL).

This sequence belongs to the IFI6/IFI27 family. Homodimer. Interacts with SKP2. Interacts with NR4A1. May interact with BCL2.

It is found in the nucleus inner membrane. Its function is as follows. May be involved in the interferon-induced negative regulation of the transcriptional activity of NR4A1, NR4A2 and NR4A3 through the enhancement of XPO1-mediated nuclear export of these nuclear receptors. Through the regulation of NR4A1 transcriptional activity, may play a role in the vascular response to injury. This Mus musculus (Mouse) protein is Interferon alpha-inducible protein 27-like protein 2A.